Consider the following 550-residue polypeptide: Glucose-6-phosphate isomerase (550 aa).

Residue Glu-356 is the Proton donor of the active site. Catalysis depends on residues His-387 and Lys-515.

This sequence belongs to the GPI family.

The protein resides in the cytoplasm. It carries out the reaction alpha-D-glucose 6-phosphate = beta-D-fructose 6-phosphate. It participates in carbohydrate biosynthesis; gluconeogenesis. Its pathway is carbohydrate degradation; glycolysis; D-glyceraldehyde 3-phosphate and glycerone phosphate from D-glucose: step 2/4. Functionally, catalyzes the reversible isomerization of glucose-6-phosphate to fructose-6-phosphate. In Aliivibrio salmonicida (strain LFI1238) (Vibrio salmonicida (strain LFI1238)), this protein is Glucose-6-phosphate isomerase.